The primary structure comprises 243 residues: UPF0688 protein C1orf174 (243 aa).

Disordered regions lie at residues 78–100 and 132–243; these read NDSA…AEGS and LAKT…DAEM. Positions 145–157 are enriched in low complexity; the sequence is SAGSGAEESNSSS. Residues Ser148 and Ser189 each carry the phosphoserine modification. The span at 233–243 shows a compositional bias: acidic residues; the sequence is DDDDDDDDAEM.

Belongs to the UPF0688 family.

The protein resides in the nucleus. The protein is UPF0688 protein C1orf174 (C1orf174) of Homo sapiens (Human).